A 576-amino-acid polypeptide reads, in one-letter code: uncharacterized protein (576 aa).

The segment at 41-78 is disordered; sequence EKESESKLNSKSTTLQSSDSEDWDSEENEDDITDVGVP. Residues 49–58 are compositionally biased toward low complexity; the sequence is NSKSTTLQSS. Positions 59-73 are enriched in acidic residues; the sequence is DSEDWDSEENEDDIT. WD repeat units follow at residues 87–126, 195–235, 248–288, 296–335, and 393–433; these read GHSKIVTTTTFDKNGSRFYTGSLDNTIHCWDLNGLSATNP, GHIA…SQLE, LSRI…KRPV, LPQQGISCLSFSQDGNYLLSRGEDNALRVWDLRNSNKCVN, and TVTA…RGVK. The tract at residues 547–576 is disordered; it reads SETQPTPIYQGVTEGDISSEEGNPSKKQKR.

This is an uncharacterized protein from Schizosaccharomyces pombe (strain 972 / ATCC 24843) (Fission yeast).